The sequence spans 454 residues: Glutamine synthetase (454 aa).

A GS beta-grasp domain is found at 19 to 111 (NNVKFIRFQF…VICDVYKDEK (93 aa)). The GS catalytic domain occupies 118 to 454 (PRSRLKAILE…DWETGKYLIY (337 aa)). Residues E142 and E144 each contribute to the Mg(2+) site. Position 194 (E194) interacts with ATP. Mg(2+) is bound by residues E199 and E206. L-glutamate-binding positions include 250–251 (NG) and G251. A Mg(2+)-binding site is contributed by H255. ATP contacts are provided by residues 257-259 (HQS) and S259. The L-glutamate site is built by R309, E315, and R327. The ATP site is built by R327, R332, and K339. Residue E344 coordinates Mg(2+). R346 lines the L-glutamate pocket.

Belongs to the glutamine synthetase family. As to quaternary structure, oligomer of 12 subunits arranged in the form of two hexagons. Mg(2+) is required as a cofactor.

The protein resides in the cytoplasm. It carries out the reaction L-glutamate + NH4(+) + ATP = L-glutamine + ADP + phosphate + H(+). With respect to regulation, feedback inhibited by glycine and alanine, and inhibited by low concentrations of methionine sulfoximine. Functionally, probably involved in nitrogen metabolism via ammonium assimilation. Catalyzes the ATP-dependent biosynthesis of glutamine from glutamate and ammonia. Beta-glutamate is a much poorer substrate than alpha-glutamate. This is Glutamine synthetase from Methanocaldococcus jannaschii (strain ATCC 43067 / DSM 2661 / JAL-1 / JCM 10045 / NBRC 100440) (Methanococcus jannaschii).